Reading from the N-terminus, the 112-residue chain is DNA-directed RNA polymerases I and III subunit RPAC2 (112 aa).

This sequence belongs to the archaeal Rpo11/eukaryotic RPB11/RPC19 RNA polymerase subunit family. As to quaternary structure, component of the RNA polymerase I (Pol I) and RNA polymerase III (Pol III) complexes consisting of at least 13 and 17 subunits, respectively.

Its subcellular location is the nucleus. Its function is as follows. DNA-dependent RNA polymerase catalyzes the transcription of DNA into RNA using the four ribonucleoside triphosphates as substrates. Common core component of RNA polymerases I and III which synthesize ribosomal RNA precursors and small RNAs, such as 5S rRNA and tRNAs, respectively. This chain is DNA-directed RNA polymerases I and III subunit RPAC2 (polr1d), found in Danio rerio (Zebrafish).